Consider the following 354-residue polypeptide: GTPase Obg (354 aa).

An Obg domain is found at 1 to 159 (MKFVDEVKIH…RDLVLELKLL (159 aa)). An OBG-type G domain is found at 160–333 (ADVGIVGYPN…LLDAVGRALF (174 aa)). GTP contacts are provided by residues 166 to 173 (GYPNAGKS), 191 to 195 (FTTLT), 212 to 215 (DIPG), 283 to 286 (TKID), and 314 to 316 (SAV). Mg(2+) contacts are provided by Ser173 and Thr193.

It belongs to the TRAFAC class OBG-HflX-like GTPase superfamily. OBG GTPase family. Monomer. Requires Mg(2+) as cofactor.

The protein localises to the cytoplasm. In terms of biological role, an essential GTPase which binds GTP, GDP and possibly (p)ppGpp with moderate affinity, with high nucleotide exchange rates and a fairly low GTP hydrolysis rate. Plays a role in control of the cell cycle, stress response, ribosome biogenesis and in those bacteria that undergo differentiation, in morphogenesis control. In Anaeromyxobacter dehalogenans (strain 2CP-C), this protein is GTPase Obg.